Here is a 457-residue protein sequence, read N- to C-terminus: tRNA-2-methylthio-N(6)-dimethylallyladenosine synthase (457 aa).

In terms of domain architecture, MTTase N-terminal spans 3 to 120 (KKVYVKTFGC…LPQMIDARRA (118 aa)). Positions 12, 49, 83, 157, 161, and 164 each coordinate [4Fe-4S] cluster. The Radical SAM core domain occupies 143-377 (RVEGPSAFVS…QATIEENVAR (235 aa)). Residues 380 to 447 (QSMVGKVERI…PHSLRGELVI (68 aa)) form the TRAM domain.

This sequence belongs to the methylthiotransferase family. MiaB subfamily. Monomer. Requires [4Fe-4S] cluster as cofactor.

It localises to the cytoplasm. It catalyses the reaction N(6)-dimethylallyladenosine(37) in tRNA + (sulfur carrier)-SH + AH2 + 2 S-adenosyl-L-methionine = 2-methylsulfanyl-N(6)-dimethylallyladenosine(37) in tRNA + (sulfur carrier)-H + 5'-deoxyadenosine + L-methionine + A + S-adenosyl-L-homocysteine + 2 H(+). Functionally, catalyzes the methylthiolation of N6-(dimethylallyl)adenosine (i(6)A), leading to the formation of 2-methylthio-N6-(dimethylallyl)adenosine (ms(2)i(6)A) at position 37 in tRNAs that read codons beginning with uridine. The polypeptide is tRNA-2-methylthio-N(6)-dimethylallyladenosine synthase (Burkholderia cenocepacia (strain ATCC BAA-245 / DSM 16553 / LMG 16656 / NCTC 13227 / J2315 / CF5610) (Burkholderia cepacia (strain J2315))).